The following is an 82-amino-acid chain: Chaperone protein DnaJ 1 (82 aa).

The segment at 1-33 (YHLGGPPVTLKLPPGTPAGRTMRARGKGAVRKD) is disordered.

The protein belongs to the DnaJ family. Homodimer. Requires Zn(2+) as cofactor.

The protein resides in the cytoplasm. Participates actively in the response to hyperosmotic and heat shock by preventing the aggregation of stress-denatured proteins and by disaggregating proteins, also in an autonomous, DnaK-independent fashion. Unfolded proteins bind initially to DnaJ; upon interaction with the DnaJ-bound protein, DnaK hydrolyzes its bound ATP, resulting in the formation of a stable complex. GrpE releases ADP from DnaK; ATP binding to DnaK triggers the release of the substrate protein, thus completing the reaction cycle. Several rounds of ATP-dependent interactions between DnaJ, DnaK and GrpE are required for fully efficient folding. Also involved, together with DnaK and GrpE, in the DNA replication of plasmids through activation of initiation proteins. The polypeptide is Chaperone protein DnaJ 1 (dnaJ1) (Streptomyces albus G).